Here is a 301-residue protein sequence, read N- to C-terminus: uncharacterized protein (301 aa).

Residues S44 and Y107 each act as charge relay system in the active site. Residue Y133 is the Proton donor of the active site. K162 acts as the Schiff-base intermediate with substrate in catalysis.

Belongs to the DapA family. In terms of assembly, homotetramer.

It is found in the cytoplasm. This is an uncharacterized protein from Pyrobaculum islandicum (strain DSM 4184 / JCM 9189 / GEO3).